Here is a 499-residue protein sequence, read N- to C-terminus: Serine/threonine protein phosphatase 2A 57 kDa regulatory subunit B' beta isoform (499 aa).

Residues 1 to 13 (MFKKIMKGGHRKP) show a composition bias toward basic residues. The interval 1–65 (MFKKIMKGGH…PVTATPPPPP (65 aa)) is disordered.

The protein belongs to the phosphatase 2A regulatory subunit B56 family. PP2A consists of a common heteromeric enzyme, composed of a catalytic subunit (subunits C), a constant regulatory subunit (subunit A), and a variety of regulatory subunits such as subunits B (the R2/B/PR55/B55, R3/B''/PR72/PR130/PR59 and R5/B'/B56 families). Interacts with BZR1. Interacts with BRI1. Interacts with SRK2E/OST1. Expressed ubiquitously, higher levels in cotyledons and flowers.

It localises to the nucleus. The protein localises to the cytoplasm. Its function is as follows. The B regulatory subunit may modulate substrate selectivity and catalytic activity, and may also direct the localization of the catalytic enzyme to a particular subcellular compartment. Required for the formation of the PP2A holoenzyme that positively regulates brassinosteroid signaling by dephosphorylating and activating BZR1. The polypeptide is Serine/threonine protein phosphatase 2A 57 kDa regulatory subunit B' beta isoform (B'BETA) (Arabidopsis thaliana (Mouse-ear cress)).